A 243-amino-acid chain; its full sequence is NADH-ubiquinone oxidoreductase chain 6 (243 aa).

The next 5 membrane-spanning stretches (helical) occupy residues 16–36 (ISSV…SVIV), 41–61 (IISV…LILL), 69–89 (AYLI…LMLI), 104–124 (IPLT…LLPY), and 201–221 (IWLF…IVII).

Belongs to the complex I subunit 6 family.

It is found in the mitochondrion membrane. The enzyme catalyses a ubiquinone + NADH + 5 H(+)(in) = a ubiquinol + NAD(+) + 4 H(+)(out). Its function is as follows. Core subunit of the mitochondrial membrane respiratory chain NADH dehydrogenase (Complex I) that is believed to belong to the minimal assembly required for catalysis. Complex I functions in the transfer of electrons from NADH to the respiratory chain. The immediate electron acceptor for the enzyme is believed to be ubiquinone. This is NADH-ubiquinone oxidoreductase chain 6 (ndh-6) from Neurospora crassa (strain ATCC 24698 / 74-OR23-1A / CBS 708.71 / DSM 1257 / FGSC 987).